A 680-amino-acid chain; its full sequence is Zinc finger protein 263 (680 aa).

K19 participates in a covalent cross-link: Glycyl lysine isopeptide (Lys-Gly) (interchain with G-Cter in SUMO2). Residues 43–125 (HLRFRRFRFQ…TLVERMQKEL (83 aa)) enclose the SCAN box domain. The interval 147–191 (LPLETAGESPSFKLEPMETERSPGPRLQELLDPSPQRDSQAVKER) is disordered. K159 participates in a covalent cross-link: Glycyl lysine isopeptide (Lys-Gly) (interchain with G-Cter in SUMO2). Phosphoserine is present on residues S168 and S180. Residues K286, K300, and K376 each participate in a glycyl lysine isopeptide (Lys-Gly) (interchain with G-Cter in SUMO2) cross-link. C2H2-type zinc fingers lie at residues 378–400 (HLCA…QRIH), 434–456 (HKCL…QRTH), 462–484 (FQCN…QRTH), 490–512 (YKCP…QRIH), and 518–540 (YRCS…ERTH). Glycyl lysine isopeptide (Lys-Gly) (interchain with G-Cter in SUMO2) cross-links involve residues K570 and K579. C2H2-type zinc fingers lie at residues 572 to 594 (FECS…QRTH), 600 to 622 (YKCI…QRIH), 628 to 650 (YTCH…LRTH), and 656 to 678 (YKCS…QRTH).

Belongs to the krueppel C2H2-type zinc-finger protein family. In terms of assembly, interacts with a number of proteins involved in chromatin modification and transcriptional corepression including DNMT1, DNMT3A, HDAC2, PHF8, TRIM28/KAP1, SETDB1, EZH2, UHRF1, CBX3/HP1-gamma, and CBX5/HP1-alpha; recruits these proteins to the SIX3 promoter region, leading to SIX3 transcriptional repression. Interacts with MAPK3/ERK1 and MAPK1/ERK2. Ubiquitinated, leading to proteasomal degradation. Expressed in Purkinje cells in the brain (at protein level).

The protein resides in the nucleus. In terms of biological role, transcription factor that binds to the consensus sequence 5'-TCCTCCC-3' and acts as a transcriptional repressor. Binds to the promoter region of SIX3 and recruits other proteins involved in chromatin modification and transcriptional corepression, resulting in methylation of the promoter and transcriptional repression. Acts as a transcriptional repressor of HS3ST1 and HS3ST3A1 via binding to gene promoter regions. The protein is Zinc finger protein 263 of Mus musculus (Mouse).